Consider the following 113-residue polypeptide: uncharacterized protein (113 aa).

This is an uncharacterized protein from Haemophilus influenzae (strain ATCC 51907 / DSM 11121 / KW20 / Rd).